The primary structure comprises 198 residues: Myc target protein 1 homolog (198 aa).

Positions 52 to 72 match the Bipartite nuclear localization signal motif; it reads RRRASASISPRMPKSSSRRPR. 2 disordered regions span residues 58–83 and 172–198; these read SISPRMPKSSSRRPRSSSHNHALNRS and NNSLRLGPSTQTPPPAYDSIIKAFPDS. Residues 172 to 181 show a composition bias toward polar residues; it reads NNSLRLGPST.

Belongs to the MYCT1 family.

The protein localises to the nucleus. May regulate certain MYC target genes, MYC seems to be a direct upstream transcriptional activator. The protein is Myc target protein 1 homolog (myct1) of Xenopus tropicalis (Western clawed frog).